Reading from the N-terminus, the 165-residue chain is uncharacterized protein (165 aa).

Positions 1–38 form a coiled coil; it reads MFTVKEKNRQELEEELNDLEFQIYRMQENMKDLSKDAK.

This is an uncharacterized protein from Bacillus subtilis (strain 168).